The sequence spans 176 residues: Cytochrome c oxidase subunit 4 isoform 2, mitochondrial (176 aa).

The transit peptide at 1-28 (MLRLTAGRVRSLLAGRATAAFSTSSARM) directs the protein to the mitochondrion. The Mitochondrial matrix segment spans residues 29 to 106 (ASHDLEVAES…TYSEMKQPSS (78 aa)). The chain crosses the membrane as a helical span at residues 107–132 (EWKTVFGGIFIFLGFTGLVVWWQALY). Residues 133-176 (VYPPRPRTFDDEWKAKQLKRMLDMRVNPIEGFSAKWDYEKGQWK) are Mitochondrial intermembrane-facing.

This sequence belongs to the cytochrome c oxidase IV family. Component of the cytochrome c oxidase (complex IV, CIV), a multisubunit enzyme composed of 14 subunits. The complex is composed of a catalytic core of 3 subunits MT-CO1, MT-CO2 and MT-CO3, encoded in the mitochondrial DNA, and 11 supernumerary subunits COX4I, COX5A, COX5B, COX6A, COX6B, COX6C, COX7A, COX7B, COX7C, COX8 and NDUFA4, which are encoded in the nuclear genome. The complex exists as a monomer or a dimer and forms supercomplexes (SCs) in the inner mitochondrial membrane with NADH-ubiquinone oxidoreductase (complex I, CI) and ubiquinol-cytochrome c oxidoreductase (cytochrome b-c1 complex, complex III, CIII), resulting in different assemblies (supercomplex SCI(1)III(2)IV(1) and megacomplex MCI(2)III(2)IV(2)).

It is found in the mitochondrion inner membrane. Its pathway is energy metabolism; oxidative phosphorylation. Component of the cytochrome c oxidase, the last enzyme in the mitochondrial electron transport chain which drives oxidative phosphorylation. The respiratory chain contains 3 multisubunit complexes succinate dehydrogenase (complex II, CII), ubiquinol-cytochrome c oxidoreductase (cytochrome b-c1 complex, complex III, CIII) and cytochrome c oxidase (complex IV, CIV), that cooperate to transfer electrons derived from NADH and succinate to molecular oxygen, creating an electrochemical gradient over the inner membrane that drives transmembrane transport and the ATP synthase. Cytochrome c oxidase is the component of the respiratory chain that catalyzes the reduction of oxygen to water. Electrons originating from reduced cytochrome c in the intermembrane space (IMS) are transferred via the dinuclear copper A center (CU(A)) of subunit 2 and heme A of subunit 1 to the active site in subunit 1, a binuclear center (BNC) formed by heme A3 and copper B (CU(B)). The BNC reduces molecular oxygen to 2 water molecules using 4 electrons from cytochrome c in the IMS and 4 protons from the mitochondrial matrix. In Thunnus obesus (Bigeye tuna), this protein is Cytochrome c oxidase subunit 4 isoform 2, mitochondrial.